The following is a 217-amino-acid chain: GTPase IMAP family member GIMD1 (217 aa).

One can recognise an AIG1-type G domain in the interval 6 to 217 (KMIINLAVFG…ENHFQVLSLA (212 aa)). GTP-binding positions include 15–23 (GRTQSGKSS), S36, and 148–150 (HAE).

Belongs to the TRAFAC class TrmE-Era-EngA-EngB-Septin-like GTPase superfamily. AIG1/Toc34/Toc159-like paraseptin GTPase family. IAN subfamily.

The protein is GTPase IMAP family member GIMD1 (Gimd1) of Mus musculus (Mouse).